The primary structure comprises 890 residues: Agglutinin-like protein ARB_02240 (890 aa).

The signal sequence occupies residues M1 to A20. 4 N-linked (GlcNAc...) asparagine glycosylation sites follow: N106, N217, N583, and N654. Residues I680–T872 form a disordered region. 2 stretches are compositionally biased toward low complexity: residues T693–S753 and T760–T790. Residues G791 to P802 show a composition bias toward polar residues. Composition is skewed to low complexity over residues S803–T812 and S821–T837. The segment covering T838–T848 has biased composition (gly residues). G864 is lipidated: GPI-anchor amidated glycine. The propeptide at A865 to I890 is removed in mature form.

This sequence belongs to the ALS family. Post-translationally, the GPI-anchor is attached to the protein in the endoplasmic reticulum and serves to target the protein to the cell surface. There, the glucosamine-inositol phospholipid moiety is cleaved off and the GPI-modified mannoprotein is covalently attached via its lipidless GPI glycan remnant to the 1,6-beta-glucan of the outer cell wall layer.

It localises to the secreted. It is found in the cell membrane. The protein resides in the cell wall. In terms of biological role, cell surface adhesion protein which mediates cell agglutination and host tissue adherence. The protein is Agglutinin-like protein ARB_02240 of Arthroderma benhamiae (strain ATCC MYA-4681 / CBS 112371) (Trichophyton mentagrophytes).